Reading from the N-terminus, the 118-residue chain is NADH-quinone oxidoreductase subunit A (118 aa).

Helical transmembrane passes span 5–25 (YAFIGIFALAAITFPLLPLVL), 62–82 (LYALAFVIFDIETVFLYPWAV), and 87–107 (LGLFALFEMVVFLAILTIGLV).

Belongs to the complex I subunit 3 family. NDH-1 is composed of 14 different subunits. Subunits NuoA, H, J, K, L, M, N constitute the membrane sector of the complex.

The protein resides in the cell membrane. It carries out the reaction a quinone + NADH + 5 H(+)(in) = a quinol + NAD(+) + 4 H(+)(out). NDH-1 shuttles electrons from NADH, via FMN and iron-sulfur (Fe-S) centers, to quinones in the respiratory chain. The immediate electron acceptor for the enzyme in this species is believed to be ubiquinone. Couples the redox reaction to proton translocation (for every two electrons transferred, four hydrogen ions are translocated across the cytoplasmic membrane), and thus conserves the redox energy in a proton gradient. The polypeptide is NADH-quinone oxidoreductase subunit A (Herpetosiphon aurantiacus (strain ATCC 23779 / DSM 785 / 114-95)).